We begin with the raw amino-acid sequence, 201 residues long: MEKFETFTGIAAPMPLVNIDTDMIIPKQFLKTIKRSGLGVHAFDEMRYDRQGNEVPDFVLNKPAYRESSILVAGDNFGCGSSREHAPWALADFGIKVVISTSFADIFFNNCFKNGMLPIVLPQEQVDLLMKDAEKGENARMTVDLEAQEITTSEGDVIKFDVDPFRKHCLINGLDDIGLTLEKADAIKAYEERAAQERPWV.

This sequence belongs to the LeuD family. LeuD type 1 subfamily. Heterodimer of LeuC and LeuD.

The catalysed reaction is (2R,3S)-3-isopropylmalate = (2S)-2-isopropylmalate. It participates in amino-acid biosynthesis; L-leucine biosynthesis; L-leucine from 3-methyl-2-oxobutanoate: step 2/4. Its function is as follows. Catalyzes the isomerization between 2-isopropylmalate and 3-isopropylmalate, via the formation of 2-isopropylmaleate. The chain is 3-isopropylmalate dehydratase small subunit from Ruegeria sp. (strain TM1040) (Silicibacter sp.).